Reading from the N-terminus, the 1373-residue chain is DNA-directed RNA polymerase subunit beta'' (1373 aa).

Positions 224, 296, 303, and 306 each coordinate Zn(2+).

It belongs to the RNA polymerase beta' chain family. RpoC2 subfamily. As to quaternary structure, in plastids the minimal PEP RNA polymerase catalytic core is composed of four subunits: alpha, beta, beta', and beta''. When a (nuclear-encoded) sigma factor is associated with the core the holoenzyme is formed, which can initiate transcription. Zn(2+) serves as cofactor.

The protein localises to the plastid. Its subcellular location is the chloroplast. The enzyme catalyses RNA(n) + a ribonucleoside 5'-triphosphate = RNA(n+1) + diphosphate. DNA-dependent RNA polymerase catalyzes the transcription of DNA into RNA using the four ribonucleoside triphosphates as substrates. The polypeptide is DNA-directed RNA polymerase subunit beta'' (Amborella trichopoda).